The following is a 117-amino-acid chain: Iron-sulfur cluster insertion protein ErpA (117 aa).

Residues Cys-45, Cys-109, and Cys-111 each coordinate iron-sulfur cluster.

Belongs to the HesB/IscA family. Homodimer. Iron-sulfur cluster serves as cofactor.

Required for insertion of 4Fe-4S clusters for at least IspG. The chain is Iron-sulfur cluster insertion protein ErpA from Chromohalobacter salexigens (strain ATCC BAA-138 / DSM 3043 / CIP 106854 / NCIMB 13768 / 1H11).